The following is a 951-amino-acid chain: Bromodomain-containing protein 8 (951 aa).

Lys85 carries the post-translational modification N6-acetyllysine. A coiled-coil region spans residues 97-171 (VRKLTAERVE…ATDAAYQARQ (75 aa)). Positions 161-273 (KATDAAYQAR…TPPPSPLLSE (113 aa)) are disordered. Positions 204–226 (TPTTMEEATSGVTPGTLPSTPVT) are enriched in polar residues. Phosphoserine is present on residues Ser456 and Ser460. The segment at 520 to 547 (EENDDPQSLPGPWEHPIQQERDKPVPLP) is disordered. Lys542 participates in a covalent cross-link: Glycyl lysine isopeptide (Lys-Gly) (interchain with G-Cter in SUMO2). At Lys554 the chain carries N6-acetyllysine; alternate. A Glycyl lysine isopeptide (Lys-Gly) (interchain with G-Cter in SUMO1); alternate cross-link involves residue Lys554. A Glycyl lysine isopeptide (Lys-Gly) (interchain with G-Cter in SUMO2); alternate cross-link involves residue Lys554. A Glycyl lysine isopeptide (Lys-Gly) (interchain with G-Cter in SUMO2) cross-link involves residue Lys582. The interval 584-745 (EPTEPEPGMS…PVSESDDGFS (162 aa)) is disordered. Over residues 610–622 (PELRSQDSDEEPR) the composition is skewed to basic and acidic residues. A Glycyl lysine isopeptide (Lys-Gly) (interchain with G-Cter in SUMO2) cross-link involves residue Lys648. Ser652 bears the Phosphoserine mark. Residues 673 to 688 (ETQHKFEMSDSLKEES) show a composition bias toward basic and acidic residues. A Glycyl lysine isopeptide (Lys-Gly) (interchain with G-Cter in SUMO2) cross-link involves residue Lys685. 3 positions are modified to phosphoserine: Ser694, Ser710, and Ser714. Residues 779–884 (IQAQKIWKKA…RDVLEQIQQF (106 aa)) enclose the Bromo domain. Residues 900-922 (AKSLRGRDSTRKQDASEKDSVPM) are disordered. Residues 904 to 919 (RGRDSTRKQDASEKDS) are compositionally biased toward basic and acidic residues.

In terms of assembly, component of the NuA4 histone acetyltransferase complex which contains the catalytic subunit KAT5/TIP60 and the subunits EP400, TRRAP/PAF400, BRD8/SMAP, EPC1, DMAP1/DNMAP1, RUVBL1/TIP49, RUVBL2, ING3, actin, ACTL6A/BAF53A, MORF4L1/MRG15, MORF4L2/MRGX, MRGBP, YEATS4/GAS41, VPS72/YL1 and MEAF6. Component of a NuA4-related complex which contains EP400, TRRAP/PAF400, SRCAP, BRD8/SMAP, EPC1, DMAP1/DNMAP1, RUVBL1/TIP49, RUVBL2, actin, ACTL6A/BAF53A, VPS72 and YEATS4/GAS41. BRD8 isoform 2 interacts with RXRA/NR2B1 and THRB/ERBA2. Component of a SWR1-like complex.

The protein resides in the nucleus. Functionally, may act as a coactivator during transcriptional activation by hormone-activated nuclear receptors (NR). Stimulates transcriptional activation by AR/DHTR, ESR1/NR3A1, RXRA/NR2B1 and THRB/ERBA2. Component of the NuA4 histone acetyltransferase (HAT) complex which is involved in transcriptional activation of select genes principally by acetylation of nucleosomal histones H4 and H2A. This modification may both alter nucleosome - DNA interactions and promote interaction of the modified histones with other proteins which positively regulate transcription. This complex may be required for the activation of transcriptional programs associated with oncogene and proto-oncogene mediated growth induction, tumor suppressor mediated growth arrest and replicative senescence, apoptosis, and DNA repair. NuA4 may also play a direct role in DNA repair when recruited to sites of DNA damage. Component of a SWR1-like complex that specifically mediates the removal of histone H2A.Z/H2AZ1 from the nucleosome. This is Bromodomain-containing protein 8 (Brd8) from Mus musculus (Mouse).